Reading from the N-terminus, the 229-residue chain is 2,3-bisphosphoglycerate-dependent phosphoglycerate mutase (229 aa).

Substrate is bound by residues 7–14 (RHGQSEWN), 20–21 (TG), R59, 86–89 (ERHY), K97, 113–114 (RR), and 182–183 (GN). The active-site Tele-phosphohistidine intermediate is the H8. Residue E86 is the Proton donor/acceptor of the active site.

The protein belongs to the phosphoglycerate mutase family. BPG-dependent PGAM subfamily.

The enzyme catalyses (2R)-2-phosphoglycerate = (2R)-3-phosphoglycerate. Its pathway is carbohydrate degradation; glycolysis; pyruvate from D-glyceraldehyde 3-phosphate: step 3/5. Catalyzes the interconversion of 2-phosphoglycerate and 3-phosphoglycerate. This chain is 2,3-bisphosphoglycerate-dependent phosphoglycerate mutase, found in Listeria monocytogenes serovar 1/2a (strain ATCC BAA-679 / EGD-e).